The following is a 206-amino-acid chain: Small ribosomal subunit protein uS4 (206 aa).

Residues 28–52 (YLDRRPYAPGQHGQRRGRGRPSDYS) form a disordered region. Positions 96–171 (RRLDNVVFRM…QKRRRVSPWI (76 aa)) constitute an S4 RNA-binding domain.

This sequence belongs to the universal ribosomal protein uS4 family. As to quaternary structure, part of the 30S ribosomal subunit. Contacts protein S5. The interaction surface between S4 and S5 is involved in control of translational fidelity.

One of the primary rRNA binding proteins, it binds directly to 16S rRNA where it nucleates assembly of the body of the 30S subunit. Its function is as follows. With S5 and S12 plays an important role in translational accuracy. The sequence is that of Small ribosomal subunit protein uS4 from Deinococcus geothermalis (strain DSM 11300 / CIP 105573 / AG-3a).